The sequence spans 227 residues: Ribose-5-phosphate isomerase A (227 aa).

Residues 28–31, 84–87, and 97–100 each bind substrate; these read TGST, DGAD, and KGGG. Catalysis depends on Glu-106, which acts as the Proton acceptor. Lys-124 contributes to the substrate binding site.

It belongs to the ribose 5-phosphate isomerase family. As to quaternary structure, homodimer.

It catalyses the reaction aldehydo-D-ribose 5-phosphate = D-ribulose 5-phosphate. It functions in the pathway carbohydrate degradation; pentose phosphate pathway; D-ribose 5-phosphate from D-ribulose 5-phosphate (non-oxidative stage): step 1/1. Its function is as follows. Catalyzes the reversible conversion of ribose-5-phosphate to ribulose 5-phosphate. The sequence is that of Ribose-5-phosphate isomerase A from Lactiplantibacillus plantarum (strain ATCC BAA-793 / NCIMB 8826 / WCFS1) (Lactobacillus plantarum).